The following is a 202-amino-acid chain: Complement component C8 gamma chain (202 aa).

Positions 1 to 20 are cleaved as a signal peptide; the sequence is MLPPGTATLLTLLLAAGSLG. Q21 is subject to Pyrrolidone carboxylic acid. A disulfide bridge links C96 with C188.

This sequence belongs to the calycin superfamily. Lipocalin family. In terms of assembly, heterotrimer of 3 chains: alpha (C8A), beta (C8B) and gamma (C8G); the alpha and gamma chains are disulfide bonded. Component of the membrane attack complex (MAC), composed of complement C5b, C6, C7, C8A, C8B, C8G and multiple copies of the pore-forming subunit C9.

The protein localises to the secreted. It is found in the target cell membrane. Membrane attack complex (MAC) assembly is inhibited by CD59, thereby protecting self-cells from damage during complement activation. MAC assembly is also inhibited by clusterin (CLU) chaperones that inhibit polymerization of C9. Its function is as follows. Component of the membrane attack complex (MAC), a multiprotein complex activated by the complement cascade, which inserts into a target cell membrane and forms a pore, leading to target cell membrane rupture and cell lysis. The MAC is initiated by proteolytic cleavage of C5 into complement C5b in response to the classical, alternative, lectin and GZMK complement pathways. The complement pathways consist in a cascade of proteins that leads to phagocytosis and breakdown of pathogens and signaling that strengthens the adaptive immune system. C8G, together with C8A and C8B, inserts into the target membrane, but does not form pores by itself. During MAC assembly, associates with C5b, C6 and C7 to form the C5b8 intermediate complex that inserts into the target membrane and traverses the bilayer increasing membrane rigidity. This Homo sapiens (Human) protein is Complement component C8 gamma chain.